The chain runs to 298 residues: Tyrosine recombinase XerC (298 aa).

The region spanning 2-88 is the Core-binding (CB) domain; that stretch reads TDLHTDVERY…ALRSFFDWLV (87 aa). One can recognise a Tyr recombinase domain in the interval 109–288; sequence HLPKNIDVDD…DFQHLASVYD (180 aa). Active-site residues include Arg148, Lys172, His240, Arg243, and His266. Tyr275 acts as the O-(3'-phospho-DNA)-tyrosine intermediate in catalysis.

It belongs to the 'phage' integrase family. XerC subfamily. In terms of assembly, forms a cyclic heterotetrameric complex composed of two molecules of XerC and two molecules of XerD, in which XerC interacts with XerD via its C-terminal region, XerD interacts with XerC via its C-terminal region and so on.

The protein localises to the cytoplasm. Its activity is regulated as follows. FtsK may regulate the catalytic switch between XerC and XerD in the heterotetrameric complex during the two steps of the recombination process. In terms of biological role, site-specific tyrosine recombinase, which acts by catalyzing the cutting and rejoining of the recombining DNA molecules. Binds cooperatively to specific DNA consensus sequences that are separated from XerD binding sites by a short central region, forming the heterotetrameric XerC-XerD complex that recombines DNA substrates. The complex is essential to convert dimers of the bacterial chromosome into monomers to permit their segregation at cell division. It also contributes to the segregational stability of plasmids. In the complex XerC specifically exchanges the top DNA strands. The polypeptide is Tyrosine recombinase XerC (Escherichia coli O157:H7).